Reading from the N-terminus, the 1650-residue chain is HEAT repeat-containing protein 1 homolog (1650 aa).

The segment at 1183-1210 (QYDSAASPGSSVAGGRGNRGHRIRQQSL) is disordered. The HEAT repeat unit spans residues 1609-1645 (LLPFLNELIEDENKQVEAQCQKVINSLQHKFGETFWS).

The protein belongs to the HEATR1/UTP10 family.

The protein localises to the nucleus. Its subcellular location is the nucleolus. Functionally, involved in nucleolar processing of pre-18S ribosomal RNA. Involved in ribosome biosynthesis. This chain is HEAT repeat-containing protein 1 homolog (toe-1), found in Caenorhabditis elegans.